Consider the following 337-residue polypeptide: GTPase Obg (337 aa).

The region spanning 1-159 (MQFIDYVKIY…RWVILELKLL (159 aa)) is the Obg domain. The region spanning 160–331 (ADVGLIGLPN…LLHYLSEKVG (172 aa)) is the OBG-type G domain. Residues 166-173 (GLPNAGKS), 191-195 (FTTLI), 213-216 (DIPG), 283-286 (TKID), and 312-314 (SAV) each bind GTP. Residues Ser-173 and Thr-193 each coordinate Mg(2+).

Belongs to the TRAFAC class OBG-HflX-like GTPase superfamily. OBG GTPase family. As to quaternary structure, monomer. Mg(2+) is required as a cofactor.

Its subcellular location is the cytoplasm. An essential GTPase which binds GTP, GDP and possibly (p)ppGpp with moderate affinity, with high nucleotide exchange rates and a fairly low GTP hydrolysis rate. Plays a role in control of the cell cycle, stress response, ribosome biogenesis and in those bacteria that undergo differentiation, in morphogenesis control. This Thermodesulfovibrio yellowstonii (strain ATCC 51303 / DSM 11347 / YP87) protein is GTPase Obg.